A 663-amino-acid chain; its full sequence is Polyunsaturated fatty acid lipoxygenase ALOX15 (663 aa).

One can recognise a PLAT domain in the interval 2–115; it reads GVYRVCVSTG…VQSLPVGTGC (114 aa). The 548-residue stretch at 116-663 folds into the Lipoxygenase domain; the sequence is TTVGDPQGLF…PSIVENSVAI (548 aa). Fe cation-binding residues include His-361, His-366, His-541, His-545, and Ile-663.

It belongs to the lipoxygenase family. Interacts with PEBP1; in response to IL13/interleukin-13, prevents the interaction of PEBP1 with RAF1 to activate the ERK signaling cascade. Fe cation is required as a cofactor. As to expression, detected in reticulocytes (at protein level).

It localises to the cytoplasm. It is found in the cytosol. The protein resides in the cell membrane. Its subcellular location is the lipid droplet. The catalysed reaction is (5Z,8Z,11Z,14Z)-eicosatetraenoate + O2 = (12S)-hydroperoxy-(5Z,8Z,10E,14Z)-eicosatetraenoate. It catalyses the reaction (5Z,8Z,11Z,14Z)-eicosatetraenoate + O2 = (15S)-hydroperoxy-(5Z,8Z,11Z,13E)-eicosatetraenoate. It carries out the reaction (9Z,12Z)-octadecadienoate + O2 = (13S)-hydroperoxy-(9Z,11E)-octadecadienoate. The enzyme catalyses (5Z,8Z,11Z,14Z)-eicosatetraenoate + 2 O2 = (14R,15S)-dihydroperoxy-(5Z,8Z,10E,12E)-eicosatetraenoate. The catalysed reaction is (5Z,8Z,11Z,14Z)-eicosatetraenoate + 2 O2 = (8S,15S)-dihydroperoxy-(5Z,9E,11Z,13E)-eicosatetraenoate. It catalyses the reaction (14S,15R)-epoxy-(5Z,8Z,11Z)-eicosatrienoate + O2 = (8S)-hydroperoxy-(14S,15R)-epoxy-(5Z,9E,11Z)-eicosatrienoate. It carries out the reaction (14S,15R)-epoxy-(5Z,8Z,11Z)-eicosatrienoate + O2 = (12S)-hydroperoxy-(14S,15R)-epoxy-(5Z,8Z,10E)-eicosatrienoate. The enzyme catalyses (14R,15S)-epoxy-(5Z,8Z,11Z)-eicosatrienoate + O2 = (5S)-hydroperoxy-(14R,15S)-epoxy-(6E,8Z,11Z)-eicosatrienoate. The catalysed reaction is (14R,15S)-epoxy-(5Z,8Z,11Z)-eicosatrienoate + O2 = (12S)-hydroperoxy-(14R,15S)-epoxy-(5Z,8Z,10E)-eicosatrienoate. It catalyses the reaction (15R)-hydroperoxy-(5Z,8Z,11Z,13E)-eicosatetraenoate = 15-oxo-(5Z,8Z,11Z,13E)-eicosatetraenoate + H2O. It carries out the reaction (15S)-hydroperoxy-(5Z,8Z,11Z,13E)-eicosatetraenoate = (14S,15S)-epoxy-(5Z,8Z,10E,12E)-eicosatetraenoate + H2O. The enzyme catalyses (12S)-hydroperoxy-(5Z,8Z,10E,14Z)-eicosatetraenoate = (8S)-hydroxy-(11S,12S)-epoxy-(5Z,9E,14Z)-eicosatrienoate. The catalysed reaction is (4Z,7Z,10Z,13Z,16Z)-docosapentaenoate + O2 = 14-hydroperoxy-(4Z,7Z,10Z,12E,16Z)-docosapentaenoate. It catalyses the reaction (7Z,10Z,13Z,16Z,19Z)-docosapentaenoate + O2 = 14-hydroperoxy-(7Z,10Z,12E,16Z,19Z)-docosapentaenoate. It carries out the reaction (4Z,7Z,10Z,13Z,16Z,19Z)-docosahexaenoate + O2 = (14S)-hydroperoxy-(4Z,7Z,10Z,12E,16Z,19Z)-docosahexaenoate. The enzyme catalyses (4Z,7Z,10Z,13Z,16Z,19Z)-docosahexaenoate + O2 = (17S)-hydroperoxy-(4Z,7Z,10Z,13Z,15E,19Z)-docosahexaenoate. The catalysed reaction is (7S)-hydroperoxy-(4Z,8E,10Z,13Z,16Z,19Z)-docosahexaenoate + O2 = (7S,14S)-dihydroperoxy-(4Z,8E,10Z,12E,16Z,19Z)-docosahexaenoate. It catalyses the reaction (7S)-hydroperoxy-(4Z,8E,10Z,13Z,16Z,19Z)-docosahexaenoate + O2 = (7S,17S)-dihydroperoxy-(4Z,8E,10Z,13Z,15E,19Z)-docosahexaenoate. It carries out the reaction (4Z,7Z,10Z,13Z,16Z,19Z)-docosahexaenoate + O2 = (11S)-hydroperoxy-(4Z,7Z,9E,13Z,16Z,19Z)-docosahexaenoate. The enzyme catalyses N-(5Z,8Z,11Z,14Z)-eicosatetraenoyl-taurine + O2 = N-(15S)-hydroperoxy-(5Z,8Z,11Z,13E)-eicosatetraenoyl-taurine. The catalysed reaction is N-(5Z,8Z,11Z,14Z)-eicosatetraenoyl-gamma-aminobutanoate + O2 = N-(15S)-hydroperoxy-(5Z,8Z,11Z,13E)-eicosatetraenoyl-gamma-aminobutanoate. It catalyses the reaction N-(5Z,8Z,11Z,14Z)-eicosatetraenoyl-glycine + O2 = N-(15S)-hydroperoxy-(5Z,8Z,11Z,13E)-eicosatetraenoyl-glycine. It carries out the reaction N-(5Z,8Z,11Z,14Z)-eicosatetraenoyl-L-alanine + O2 = N-(15S)-hydroperoxy-(5Z,8Z,11Z,13E)-eicosatetraenoyl-alanine. The enzyme catalyses N-(5Z,8Z,11Z,14Z)-eicosatetraenoyl-taurine + O2 = N-(12S)-hydroperoxy-(5Z,8Z,10E,14Z)-eicosatetraenoyl-taurine. The catalysed reaction is N-(5Z,8Z,11Z,14Z)-eicosatetraenoyl-gamma-aminobutanoate + O2 = N-(12S)-hydroperoxy-(5Z,8Z,10E,14Z)-eicosatetraenoyl-gamma-aminobutanoate. It catalyses the reaction N-(5Z,8Z,11Z,14Z)-eicosatetraenoyl-glycine + O2 = N-(12S)-hydroperoxy-(5Z,8Z,10E,14Z)-eicosatetraenoyl-glycine. It carries out the reaction N-(5Z,8Z,11Z,14Z)-eicosatetraenoyl-L-alanine + O2 = N-(12S)-hydroperoxy-(5Z,8Z,10E,14Z)-eicosatetraenoyl-alanine. The protein operates within lipid metabolism; hydroperoxy eicosatetraenoic acid biosynthesis. Its function is as follows. Non-heme iron-containing dioxygenase that catalyzes the stereo-specific peroxidation of free and esterified polyunsaturated fatty acids generating a spectrum of bioactive lipid mediators. It inserts peroxyl groups at C12 or C15 of arachidonate ((5Z,8Z,11Z,14Z)-eicosatetraenoate) producing both 12-hydroperoxyeicosatetraenoate/12-HPETE and 15-hydroperoxyeicosatetraenoate/15-HPETE. It may then act on 12-HPETE to produce hepoxilins, which may show pro-inflammatory properties. Can also peroxidize linoleate ((9Z,12Z)-octadecadienoate) to 13-hydroperoxyoctadecadienoate. May participate in the sequential oxidations of DHA ((4Z,7Z,10Z,13Z,16Z,19Z)-docosahexaenoate) to generate specialized pro-resolving mediators (SPMs)like resolvin D5 ((7S,17S)-diHPDHA) and (7S,14S)-diHPDHA, that actively down-regulate the immune response and have anti-aggregation properties with platelets. Can convert epoxy fatty acids to hydroperoxy-epoxides derivatives followed by an intramolecular nucleophilic substitution leading to the formation of monocyclic endoperoxides. Plays an important role during the maintenance of self-tolerance by peroxidizing membrane-bound phosphatidylethanolamine which can then signal the sorting process for clearance of apoptotic cells during inflammation and prevent an autoimmune response. In addition to its role in the immune and inflammatory responses, this enzyme may play a role in epithelial wound healing in the cornea through production of lipoxin A4 (LXA(4)) and docosahexaenoic acid-derived neuroprotectin D1 (NPD1; 10R,17S-HDHA), both lipid autacoids exhibit anti-inflammatory and neuroprotective properties. Furthermore, it may regulate actin polymerization which is crucial for several biological processes such as the phagocytosis of apoptotic cells. It is also implicated in the generation of endogenous ligands for peroxisome proliferator activated receptor (PPAR-gamma), hence modulating macrophage development and function. It may also exert a negative effect on skeletal development by regulating bone mass through this pathway. As well as participates in ER stress and downstream inflammation in adipocytes, pancreatic islets, and liver. Finally, it is also involved in the cellular response to IL13/interleukin-13. This is Polyunsaturated fatty acid lipoxygenase ALOX15 from Oryctolagus cuniculus (Rabbit).